A 419-amino-acid polypeptide reads, in one-letter code: Phosphoribosylamine--glycine ligase (419 aa).

The ATP-grasp domain occupies lysine 109–glutamate 311. Alanine 135–serine 191 lines the ATP pocket. Residues glutamate 281 and asparagine 283 each coordinate Mg(2+).

The protein belongs to the GARS family. The cofactor is Mg(2+). It depends on Mn(2+) as a cofactor.

It carries out the reaction 5-phospho-beta-D-ribosylamine + glycine + ATP = N(1)-(5-phospho-beta-D-ribosyl)glycinamide + ADP + phosphate + H(+). It functions in the pathway purine metabolism; IMP biosynthesis via de novo pathway; N(1)-(5-phospho-D-ribosyl)glycinamide from 5-phospho-alpha-D-ribose 1-diphosphate: step 2/2. The protein is Phosphoribosylamine--glycine ligase of Synechocystis sp. (strain ATCC 27184 / PCC 6803 / Kazusa).